A 103-amino-acid chain; its full sequence is Putative membrane protein insertion efficiency factor (103 aa).

The tract at residues 68-103 (HEGGYDPVPLAKQDAKPENNSESESLLNQPTETKSL) is disordered. The segment covering 87–103 (NSESESLLNQPTETKSL) has biased composition (polar residues).

The protein belongs to the UPF0161 family.

The protein resides in the cell inner membrane. In terms of biological role, could be involved in insertion of integral membrane proteins into the membrane. The sequence is that of Putative membrane protein insertion efficiency factor from Idiomarina loihiensis (strain ATCC BAA-735 / DSM 15497 / L2-TR).